A 524-amino-acid chain; its full sequence is RNA-splicing ligase RtcB homolog 1 (524 aa).

Residues aspartate 141, cysteine 144, histidine 249, histidine 281, and histidine 372 each coordinate Mn(2+). 248–252 lines the GMP pocket; that stretch reads NHYLE. GMP is bound by residues 372–373, 421–424, serine 428, 447–450, and lysine 523; these read HN, GGSM, and HGAG. Histidine 447 functions as the GMP-histidine intermediate in the catalytic mechanism.

Belongs to the RtcB family. Catalytic component of the tRNA-splicing ligase complex. It depends on Mn(2+) as a cofactor.

The enzyme catalyses a 3'-end 3'-phospho-ribonucleotide-RNA + a 5'-end dephospho-ribonucleoside-RNA + GTP = a ribonucleotidyl-ribonucleotide-RNA + GMP + diphosphate. It carries out the reaction a 3'-end 2',3'-cyclophospho-ribonucleotide-RNA + a 5'-end dephospho-ribonucleoside-RNA + GTP + H2O = a ribonucleotidyl-ribonucleotide-RNA + GMP + diphosphate + H(+). In terms of biological role, catalytic subunit of the tRNA-splicing ligase complex that acts by directly joining spliced tRNA halves to mature-sized tRNAs by incorporating the precursor-derived splice junction phosphate into the mature tRNA as a canonical 3',5'-phosphodiester. May act as an RNA ligase with broad substrate specificity, and may function toward other RNAs. The sequence is that of RNA-splicing ligase RtcB homolog 1 from Entamoeba histolytica (strain ATCC 30459 / HM-1:IMSS / ABRM).